The sequence spans 387 residues: 3-ketoacyl-CoA thiolase (387 aa).

C91 (acyl-thioester intermediate) is an active-site residue. Catalysis depends on proton acceptor residues H343 and C373.

Belongs to the thiolase-like superfamily. Thiolase family. Heterotetramer of two alpha chains (FadB) and two beta chains (FadA).

Its subcellular location is the cytoplasm. The catalysed reaction is an acyl-CoA + acetyl-CoA = a 3-oxoacyl-CoA + CoA. The protein operates within lipid metabolism; fatty acid beta-oxidation. Functionally, catalyzes the final step of fatty acid oxidation in which acetyl-CoA is released and the CoA ester of a fatty acid two carbons shorter is formed. The sequence is that of 3-ketoacyl-CoA thiolase from Escherichia coli O1:K1 / APEC.